A 485-amino-acid chain; its full sequence is T-complex protein 1 subunit theta (485 aa).

It belongs to the TCP-1 chaperonin family. Component of the T-complex protein 1 (TCP1) complex.

It localises to the cytoplasm. Its function is as follows. Molecular chaperone; assists the folding of proteins upon ATP hydrolysis. This is T-complex protein 1 subunit theta (CCT8) from Encephalitozoon cuniculi (strain GB-M1) (Microsporidian parasite).